The following is a 207-amino-acid chain: Glycerol-3-phosphate acyltransferase (207 aa).

6 helical membrane passes run 7–27 (YALAAVAGYLSGSIPFGLVIV), 58–78 (LATFLLDSLKAGLVALAFTLL), 83–103 (VGFVAGFAAFIGHCYPVWLGF), 116–136 (LAFVSPLHGLVVAAPVWLGLF), 141–161 (ISSLAALTAAVAVPPGAWLMG), and 166–186 (LILAGLALLSVFVFWTHRENI).

This sequence belongs to the PlsY family. As to quaternary structure, probably interacts with PlsX.

It localises to the cell inner membrane. The enzyme catalyses an acyl phosphate + sn-glycerol 3-phosphate = a 1-acyl-sn-glycero-3-phosphate + phosphate. The protein operates within lipid metabolism; phospholipid metabolism. Its function is as follows. Catalyzes the transfer of an acyl group from acyl-phosphate (acyl-PO(4)) to glycerol-3-phosphate (G3P) to form lysophosphatidic acid (LPA). This enzyme utilizes acyl-phosphate as fatty acyl donor, but not acyl-CoA or acyl-ACP. This chain is Glycerol-3-phosphate acyltransferase, found in Hyphomonas neptunium (strain ATCC 15444).